We begin with the raw amino-acid sequence, 257 residues long: NAD-capped RNA hydrolase NudC (257 aa).

R69 is a substrate binding site. Zn(2+)-binding residues include C98 and C101. E111 lines the substrate pocket. Residues C116 and C119 each contribute to the Zn(2+) site. Residue Y124 coordinates substrate. The Nudix hydrolase domain maps to 125–248 (PQIAPCIIVA…TVARRLIEDT (124 aa)). A divalent metal cation-binding residues include A158, E174, and E178. The Nudix box motif lies at 159–180 (GFVEVGETLEQAVAREVMEESG). 192–199 (QPWPFPQS) contributes to the substrate binding site. E219 is a binding site for a divalent metal cation. Residue A241 participates in substrate binding.

The protein belongs to the Nudix hydrolase family. NudC subfamily. As to quaternary structure, homodimer. Mg(2+) serves as cofactor. Mn(2+) is required as a cofactor. The cofactor is Zn(2+).

It carries out the reaction a 5'-end NAD(+)-phospho-ribonucleoside in mRNA + H2O = a 5'-end phospho-adenosine-phospho-ribonucleoside in mRNA + beta-nicotinamide D-ribonucleotide + 2 H(+). The enzyme catalyses NAD(+) + H2O = beta-nicotinamide D-ribonucleotide + AMP + 2 H(+). The catalysed reaction is NADH + H2O = reduced beta-nicotinamide D-ribonucleotide + AMP + 2 H(+). In terms of biological role, mRNA decapping enzyme that specifically removes the nicotinamide adenine dinucleotide (NAD) cap from a subset of mRNAs by hydrolyzing the diphosphate linkage to produce nicotinamide mononucleotide (NMN) and 5' monophosphate mRNA. The NAD-cap is present at the 5'-end of some mRNAs and stabilizes RNA against 5'-processing. Has preference for mRNAs with a 5'-end purine. Catalyzes the hydrolysis of a broad range of dinucleotide pyrophosphates. This Klebsiella pneumoniae (strain 342) protein is NAD-capped RNA hydrolase NudC.